The chain runs to 275 residues: Rhamnulose-1-phosphate aldolase (275 aa).

Glu117 is an active-site residue. The Zn(2+) site is built by His141, His143, and His212.

Belongs to the aldolase class II family. RhaD subfamily. In terms of assembly, homotetramer. Zn(2+) serves as cofactor.

Its subcellular location is the cytoplasm. The catalysed reaction is L-rhamnulose 1-phosphate = (S)-lactaldehyde + dihydroxyacetone phosphate. Its pathway is carbohydrate degradation; L-rhamnose degradation; glycerone phosphate from L-rhamnose: step 3/3. In terms of biological role, catalyzes the reversible cleavage of L-rhamnulose-1-phosphate to dihydroxyacetone phosphate (DHAP) and L-lactaldehyde. The chain is Rhamnulose-1-phosphate aldolase from Salmonella paratyphi B (strain ATCC BAA-1250 / SPB7).